The primary structure comprises 120 residues: NAD(P)H-quinone oxidoreductase subunit 3, chloroplastic (120 aa).

The next 3 helical transmembrane spans lie at 9–29, 64–84, and 88–108; these read IFWA…LISG, MFAL…PWAM, and VLGV…IVGS.

It belongs to the complex I subunit 3 family. As to quaternary structure, NDH is composed of at least 16 different subunits, 5 of which are encoded in the nucleus.

It is found in the plastid. Its subcellular location is the chloroplast thylakoid membrane. The enzyme catalyses a plastoquinone + NADH + (n+1) H(+)(in) = a plastoquinol + NAD(+) + n H(+)(out). The catalysed reaction is a plastoquinone + NADPH + (n+1) H(+)(in) = a plastoquinol + NADP(+) + n H(+)(out). In terms of biological role, NDH shuttles electrons from NAD(P)H:plastoquinone, via FMN and iron-sulfur (Fe-S) centers, to quinones in the photosynthetic chain and possibly in a chloroplast respiratory chain. The immediate electron acceptor for the enzyme in this species is believed to be plastoquinone. Couples the redox reaction to proton translocation, and thus conserves the redox energy in a proton gradient. The chain is NAD(P)H-quinone oxidoreductase subunit 3, chloroplastic from Platanus occidentalis (Sycamore).